The primary structure comprises 154 residues: NADPH-dependent 7-cyano-7-deazaguanine reductase (154 aa).

Cys-54 (thioimide intermediate) is an active-site residue. Residue Asp-61 is the Proton donor of the active site. Substrate is bound by residues 76-78 and 95-96; these read VES and HE.

This sequence belongs to the GTP cyclohydrolase I family. QueF type 1 subfamily.

It is found in the cytoplasm. The catalysed reaction is 7-aminomethyl-7-carbaguanine + 2 NADP(+) = 7-cyano-7-deazaguanine + 2 NADPH + 3 H(+). It functions in the pathway tRNA modification; tRNA-queuosine biosynthesis. Catalyzes the NADPH-dependent reduction of 7-cyano-7-deazaguanine (preQ0) to 7-aminomethyl-7-deazaguanine (preQ1). This Porphyromonas gingivalis (strain ATCC 33277 / DSM 20709 / CIP 103683 / JCM 12257 / NCTC 11834 / 2561) protein is NADPH-dependent 7-cyano-7-deazaguanine reductase.